The chain runs to 363 residues: MTKTYHIAVLPGDGIGPEVMAQASKVLDAVRQRFGLKISTSVYDVGGAAIDRHGSPLPAATVAGCEQADAILFGSVGGPKWEHLPPAEQPERGALLPLRKHFKLFSNLRPARLYQGLEDFCPLRSDIAARGFDILCVRELTGGIYFGQPKGREGQGMHERAFDTEVYHRFEIERIARIAFESARKRRSKVTSIDKANVLQSSILWREVVNGIAADYPDVALSHMYIDNATMQLIKDPSQFDVLLCSNLFGDILSDECAMITGSMGMLPSASLNEQGFGLYEPAGGSAPDIAGKNIANPIAQILSLTLLLRFSLGKDDAADAIERAINQALEQGYRTADLAGDGHAIGTHEMGDIIAKFVVEGV.

78-91 (GPKWEHLPPAEQPE) lines the NAD(+) pocket. 4 residues coordinate substrate: Arg-99, Arg-109, Arg-138, and Asp-227. 3 residues coordinate Mg(2+): Asp-227, Asp-251, and Asp-255. 285–297 (GSAPDIAGKNIAN) lines the NAD(+) pocket.

Belongs to the isocitrate and isopropylmalate dehydrogenases family. LeuB type 1 subfamily. Homodimer. The cofactor is Mg(2+). Mn(2+) serves as cofactor.

It localises to the cytoplasm. It catalyses the reaction (2R,3S)-3-isopropylmalate + NAD(+) = 4-methyl-2-oxopentanoate + CO2 + NADH. It functions in the pathway amino-acid biosynthesis; L-leucine biosynthesis; L-leucine from 3-methyl-2-oxobutanoate: step 3/4. Its function is as follows. Catalyzes the oxidation of 3-carboxy-2-hydroxy-4-methylpentanoate (3-isopropylmalate) to 3-carboxy-4-methyl-2-oxopentanoate. The product decarboxylates to 4-methyl-2 oxopentanoate. The chain is 3-isopropylmalate dehydrogenase from Yersinia pestis.